The chain runs to 447 residues: Na(+)-translocating NADH-quinone reductase subunit A (447 aa).

This sequence belongs to the NqrA family. Composed of six subunits; NqrA, NqrB, NqrC, NqrD, NqrE and NqrF.

It catalyses the reaction a ubiquinone + n Na(+)(in) + NADH + H(+) = a ubiquinol + n Na(+)(out) + NAD(+). NQR complex catalyzes the reduction of ubiquinone-1 to ubiquinol by two successive reactions, coupled with the transport of Na(+) ions from the cytoplasm to the periplasm. NqrA to NqrE are probably involved in the second step, the conversion of ubisemiquinone to ubiquinol. This chain is Na(+)-translocating NADH-quinone reductase subunit A, found in Neisseria meningitidis serogroup A / serotype 4A (strain DSM 15465 / Z2491).